A 745-amino-acid polypeptide reads, in one-letter code: Phosphoribosylformylglycinamidine synthase subunit PurL (745 aa).

His-47 is an active-site residue. ATP is bound by residues Tyr-50 and Lys-90. Residue Glu-92 coordinates Mg(2+). Residues 93 to 96 and Arg-115 contribute to the substrate site; that span reads SHNH. His-94 serves as the catalytic Proton acceptor. Mg(2+) is bound at residue Asp-116. Residue Gln-240 participates in substrate binding. Residue Asp-268 coordinates Mg(2+). 312–314 provides a ligand contact to substrate; that stretch reads ESQ. 2 residues coordinate ATP: Asn-501 and Gly-538. Asn-539 serves as a coordination point for Mg(2+). Ser-541 is a binding site for substrate.

It belongs to the FGAMS family. In terms of assembly, monomer. Part of the FGAM synthase complex composed of 1 PurL, 1 PurQ and 2 PurS subunits.

It is found in the cytoplasm. It catalyses the reaction N(2)-formyl-N(1)-(5-phospho-beta-D-ribosyl)glycinamide + L-glutamine + ATP + H2O = 2-formamido-N(1)-(5-O-phospho-beta-D-ribosyl)acetamidine + L-glutamate + ADP + phosphate + H(+). It functions in the pathway purine metabolism; IMP biosynthesis via de novo pathway; 5-amino-1-(5-phospho-D-ribosyl)imidazole from N(2)-formyl-N(1)-(5-phospho-D-ribosyl)glycinamide: step 1/2. Part of the phosphoribosylformylglycinamidine synthase complex involved in the purines biosynthetic pathway. Catalyzes the ATP-dependent conversion of formylglycinamide ribonucleotide (FGAR) and glutamine to yield formylglycinamidine ribonucleotide (FGAM) and glutamate. The FGAM synthase complex is composed of three subunits. PurQ produces an ammonia molecule by converting glutamine to glutamate. PurL transfers the ammonia molecule to FGAR to form FGAM in an ATP-dependent manner. PurS interacts with PurQ and PurL and is thought to assist in the transfer of the ammonia molecule from PurQ to PurL. This chain is Phosphoribosylformylglycinamidine synthase subunit PurL, found in Leptospira borgpetersenii serovar Hardjo-bovis (strain JB197).